The chain runs to 200 residues: Cytochrome c biogenesis ATP-binding export protein CcmA (200 aa).

Residues 1-200 (MRLSGNGLRC…ARELRIGGAA (200 aa)) enclose the ABC transporter domain. 35 to 42 (GPNGAGKT) provides a ligand contact to ATP.

Belongs to the ABC transporter superfamily. CcmA exporter (TC 3.A.1.107) family. As to quaternary structure, the complex is composed of two ATP-binding proteins (CcmA) and two transmembrane proteins (CcmB).

It localises to the cell inner membrane. It catalyses the reaction heme b(in) + ATP + H2O = heme b(out) + ADP + phosphate + H(+). In terms of biological role, part of the ABC transporter complex CcmAB involved in the biogenesis of c-type cytochromes; once thought to export heme, this seems not to be the case, but its exact role is uncertain. Responsible for energy coupling to the transport system. This chain is Cytochrome c biogenesis ATP-binding export protein CcmA, found in Nitrobacter winogradskyi (strain ATCC 25391 / DSM 10237 / CIP 104748 / NCIMB 11846 / Nb-255).